The chain runs to 210 residues: Calaxin (210 aa).

EF-hand domains lie at 64 to 99 (TDDM…FLRG), 100 to 135 (TLDE…SLIR), and 145 to 180 (GIKD…ENLL). Residues D77, D79, D81, Y83, E88, D113, N115, D117, Y119, E124, D158, D160, D162, R164, and D169 each contribute to the Ca(2+) site.

In terms of assembly, component of the outer dynein arm-docking complex along with ODAD1, ODAD2, ODAD3 and ODAD4.

The protein resides in the cytoplasm. The protein localises to the cytoskeleton. It is found in the cilium axoneme. It localises to the cell projection. Its subcellular location is the cilium. The protein resides in the flagellum. In terms of biological role, component of the outer dynein arm-docking complex (ODA-DC) that mediates outer dynein arms (ODA) binding onto the doublet microtubule. Seems to regulate the assembly of both ODAs and their axonemal docking complex onto ciliary microtubules. Regulates ciliary and flagellar motility and is required for cilia-driven determination of body laterality. Functionally, regulates ciliary motility and is required for cilia-driven determination of body laterality. The sequence is that of Calaxin (clxn) from Danio rerio (Zebrafish).